Consider the following 277-residue polypeptide: Shikimate dehydrogenase (NADP(+)) (277 aa).

Shikimate is bound by residues 14–16 (SKS) and Thr-61. Lys-65 functions as the Proton acceptor in the catalytic mechanism. Asp-77 contributes to the NADP(+) binding site. Residues Asn-86 and Asp-102 each coordinate shikimate. Residues 127–131 (GAGGA), 151–156 (NRTPDK), and Met-215 contribute to the NADP(+) site. Tyr-217 is a binding site for shikimate. An NADP(+)-binding site is contributed by Gly-239.

Belongs to the shikimate dehydrogenase family. As to quaternary structure, homodimer.

It catalyses the reaction shikimate + NADP(+) = 3-dehydroshikimate + NADPH + H(+). The protein operates within metabolic intermediate biosynthesis; chorismate biosynthesis; chorismate from D-erythrose 4-phosphate and phosphoenolpyruvate: step 4/7. In terms of biological role, involved in the biosynthesis of the chorismate, which leads to the biosynthesis of aromatic amino acids. Catalyzes the reversible NADPH linked reduction of 3-dehydroshikimate (DHSA) to yield shikimate (SA). The chain is Shikimate dehydrogenase (NADP(+)) from Nitrosomonas eutropha (strain DSM 101675 / C91 / Nm57).